Here is a 193-residue protein sequence, read N- to C-terminus: MRALVDAIRAQGTVLPGGILKVDGLINHQLLPQLTREMGETFARSFGPLKPTKVVTIEVSGIAPALATSMVLGVPMVYARKKRPVTMQGPVYTAQSVSRTKGGVVELFVSHEYLSADDRVVVIDDFLASGGTLLALAGMIRESGAQLLGMGCVVEKAFENGRANLASLGVPVRTLANIVRMDEGGTLVVEAGH.

Leucine 20 and asparagine 27 together coordinate xanthine. 128–132 (ASGGT) lines the 5-phospho-alpha-D-ribose 1-diphosphate pocket. Residue lysine 156 participates in xanthine binding.

Belongs to the purine/pyrimidine phosphoribosyltransferase family. Xpt subfamily. As to quaternary structure, homodimer.

The protein resides in the cytoplasm. The enzyme catalyses XMP + diphosphate = xanthine + 5-phospho-alpha-D-ribose 1-diphosphate. It functions in the pathway purine metabolism; XMP biosynthesis via salvage pathway; XMP from xanthine: step 1/1. Its function is as follows. Converts the preformed base xanthine, a product of nucleic acid breakdown, to xanthosine 5'-monophosphate (XMP), so it can be reused for RNA or DNA synthesis. This Deinococcus deserti (strain DSM 17065 / CIP 109153 / LMG 22923 / VCD115) protein is Xanthine phosphoribosyltransferase.